A 100-amino-acid chain; its full sequence is MRALTLLALLALATLCITGQAGAKPSGAESSKGAAFVSKQEGSEVVKRPRRYLYQWLGAPAPYPDPLEPKREVCELNPDCDELADHIGFQEAYRRFYGPV.

A signal peptide spans 1–23; sequence MRALTLLALLALATLCITGQAGA. The propeptide occupies 24–51; the sequence is KPSGAESSKGAAFVSKQEGSEVVKRPRR. The 47-residue stretch at 52 to 98 folds into the Gla domain; the sequence is YLYQWLGAPAPYPDPLEPKREVCELNPDCDELADHIGFQEAYRRFYG. A 4-hydroxyproline modification is found at Pro60. Ca(2+) is bound by residues Glu68, Glu72, Glu75, and Asp81. 4-carboxyglutamate is present on residues Glu68, Glu72, and Glu75. Cys74 and Cys80 are disulfide-bonded.

Belongs to the osteocalcin/matrix Gla protein family. Gamma-carboxyglutamate residues are formed by vitamin K dependent carboxylation by GGCX. These residues are essential for the binding of calcium. Decarboxylation promotes the hormone activity.

The protein localises to the secreted. Its function is as follows. The carboxylated form is one of the main organic components of the bone matrix, which constitutes 1-2% of the total bone protein: it acts as a negative regulator of bone formation and is required to limit bone formation without impairing bone resorption or mineralization. The carboxylated form binds strongly to apatite and calcium. In terms of biological role, the uncarboxylated form acts as a hormone secreted by osteoblasts, which regulates different cellular processes, such as energy metabolism, male fertility and brain development. Regulates of energy metabolism by acting as a hormone favoring pancreatic beta-cell proliferation, insulin secretion and sensitivity and energy expenditure. Uncarboxylated osteocalcin hormone also promotes testosterone production in the testes: acts as a ligand for G protein-coupled receptor GPRC6A at the surface of Leydig cells, initiating a signaling response that promotes the expression of enzymes required for testosterone synthesis in a CREB-dependent manner. Also acts as a regulator of brain development: osteocalcin hormone crosses the blood-brain barrier and acts as a ligand for GPR158 on neurons, initiating a signaling response that prevents neuronal apoptosis in the hippocampus, favors the synthesis of all monoamine neurotransmitters and inhibits that of gamma-aminobutyric acid (GABA). Osteocalcin also crosses the placenta during pregnancy and maternal osteocalcin is required for fetal brain development. The chain is Osteocalcin (BGLAP) from Macaca mulatta (Rhesus macaque).